The primary structure comprises 455 residues: 5'-nucleotidase domain-containing protein 1 (455 aa).

Asp-16 acts as the Nucleophile in catalysis. Mg(2+) contacts are provided by Asp-16 and Asp-18. Residue Asp-18 is the Proton donor of the active site. Position 171 is an N6-acetyllysine (Lys-171). Position 313 (Asp-313) interacts with Mg(2+). Residues 339–364 show a composition bias toward basic and acidic residues; it reads GDEGTRSQRPEESEPLEKKGKYEGPK. Residues 339-368 are disordered; the sequence is GDEGTRSQRPEESEPLEKKGKYEGPKAKPL.

This sequence belongs to the 5'(3')-deoxyribonucleotidase family.

The chain is 5'-nucleotidase domain-containing protein 1 (NT5DC1) from Homo sapiens (Human).